The chain runs to 513 residues: ATP synthase subunit alpha (513 aa).

169 to 176 (GDRQTGKT) contacts ATP.

It belongs to the ATPase alpha/beta chains family. In terms of assembly, F-type ATPases have 2 components, CF(1) - the catalytic core - and CF(0) - the membrane proton channel. CF(1) has five subunits: alpha(3), beta(3), gamma(1), delta(1), epsilon(1). CF(0) has three main subunits: a(1), b(2) and c(9-12). The alpha and beta chains form an alternating ring which encloses part of the gamma chain. CF(1) is attached to CF(0) by a central stalk formed by the gamma and epsilon chains, while a peripheral stalk is formed by the delta and b chains.

The protein resides in the cell inner membrane. The enzyme catalyses ATP + H2O + 4 H(+)(in) = ADP + phosphate + 5 H(+)(out). Functionally, produces ATP from ADP in the presence of a proton gradient across the membrane. The alpha chain is a regulatory subunit. This chain is ATP synthase subunit alpha, found in Haemophilus ducreyi (strain 35000HP / ATCC 700724).